A 160-amino-acid polypeptide reads, in one-letter code: UPF0262 protein BSUIS_A0274 (160 aa).

It belongs to the UPF0262 family.

The polypeptide is UPF0262 protein BSUIS_A0274 (Brucella suis (strain ATCC 23445 / NCTC 10510)).